The following is a 308-amino-acid chain: Porphobilinogen deaminase (308 aa).

The residue at position 241 (Cys-241) is an S-(dipyrrolylmethanemethyl)cysteine.

It belongs to the HMBS family. Monomer. The cofactor is dipyrromethane.

It carries out the reaction 4 porphobilinogen + H2O = hydroxymethylbilane + 4 NH4(+). It functions in the pathway porphyrin-containing compound metabolism; protoporphyrin-IX biosynthesis; coproporphyrinogen-III from 5-aminolevulinate: step 2/4. In terms of biological role, tetrapolymerization of the monopyrrole PBG into the hydroxymethylbilane pre-uroporphyrinogen in several discrete steps. The chain is Porphobilinogen deaminase from Staphylococcus saprophyticus subsp. saprophyticus (strain ATCC 15305 / DSM 20229 / NCIMB 8711 / NCTC 7292 / S-41).